The primary structure comprises 624 residues: MAIVSSVPLASKSCLHKSLISSIHKLKPFCRTIPTLGMSRPGKYVMPSMSMSSPVSDDGVQRRTGGYHSNLWNDDIIQFLSTPYGEPAYRERGERLIDEVKNMFNSISMEDVEFSPLNDLIQRLWIVDSVERLGIDRHFKNEIKSTLDYVYSYWTQKGIGCGIESVDPDLNSTALGLRTLRLHGYPVSAEVLKHFQNQNGQFACSPSETEGEMRSIVNLYRASLIAFPGEKVMEEAEIFSTKYLKEALQKIPVSSLSREIGDVLEQDWHTNLPRLEARNYIDVFGQDTKDTKLYMKTEKLLELAKLEFNIFQSLQKTELDSLLRWWKDSGFHHITFSRHLHVEYYTLASCIAIEPQHSRFRLGFAKACHVITILDDMYDVFGTIDELELFTAQIKRWDPSATDCLPKYMKRMYMILYDMVNEMSREAETAQGRDTLNYARQAWEDFIDSYMQEAKWIATGYLPTFDEYFENGKVSSGHRVAALQPILTMDIPFPHDILKEVDFPSKLNDLASAILRLRGDTRCYKADRARGEEASCISCYMKDNPGATEEDALSHINAVISDVIKGLNWELLNPNSSVPISSKKHVFDVSRALHYGYKYRDGYSVSNIETKSLVMRTLLESVPF.

The transit peptide at Met-1–Ser-48 directs the protein to the chloroplast. Residues Asp-375, Asp-379, and Asp-527 each coordinate Mg(2+). Positions Asp-375–Asp-379 match the DDXXD motif motif.

Belongs to the terpene synthase family. Tpsd subfamily. Requires Mg(2+) as cofactor. It depends on Mn(2+) as a cofactor.

It localises to the plastid. Its subcellular location is the chloroplast. The enzyme catalyses (2E)-geranyl diphosphate = (-)-beta-phellandrene + diphosphate. Its pathway is terpene metabolism; oleoresin biosynthesis. Its function is as follows. Terpene synthase (TPS) involved in the biosynthesis of monoterpene natural products included in conifer oleoresin secretions and volatile emissions; these compounds contribute to biotic and abiotic stress defense against herbivores and pathogens. Catalyzes the conversion of (2E)-geranyl diphosphate (GPP) to (-)-beta-phellandrene. This Picea sitchensis (Sitka spruce) protein is (-)-beta-phellandrene synthase 3, chloroplastic.